Here is a 314-residue protein sequence, read N- to C-terminus: Olfactory receptor 1E5 (314 aa).

Residues 1–25 lie on the Extracellular side of the membrane; the sequence is MMGQNQTSISDFLLLGLPIQPEQQN. Asn5 carries an N-linked (GlcNAc...) asparagine glycan. Residues 26-49 traverse the membrane as a helical segment; the sequence is LCYALFLAMYLTTLLGNLLIIVLI. Topologically, residues 50 to 57 are cytoplasmic; that stretch reads RLDSHLHT. A helical membrane pass occupies residues 58–79; that stretch reads PMYLFLSNLSFSDLCFSSVTIP. The Extracellular segment spans residues 80–100; the sequence is KLLQNMQNQDPSIPYADCLTQ. A disulfide bridge connects residues Cys97 and Cys189. Residues 101–120 form a helical membrane-spanning segment; sequence MYFFLLFGDLESFLLVAMAY. The Cytoplasmic portion of the chain corresponds to 121–139; it reads DRYVAICFPLHYTAIMSPM. Residues 140-158 form a helical membrane-spanning segment; sequence LCLSLVALSWVLTTFHAML. At 159-196 the chain is on the extracellular side; sequence HTLLMARLCFCADNVIPHFFCDMSALLKLACSDTRVNE. The chain crosses the membrane as a helical span at residues 197–219; sequence WVIFIMGGLIVVIPFLLILGSYA. Residues 220 to 236 lie on the Cytoplasmic side of the membrane; sequence RIVSSILKVPSSKGICK. The chain crosses the membrane as a helical span at residues 237 to 260; that stretch reads AFSTCGSHLSVVSLFYGTIIGLYL. Residues 261–272 are Extracellular-facing; that stretch reads CPSANSSTLKET. Asn265 carries an N-linked (GlcNAc...) asparagine glycan. A helical membrane pass occupies residues 273 to 292; sequence VMAMMYTVVTPMLNPFIYSL. Residues 293–314 lie on the Cytoplasmic side of the membrane; sequence RNRDMKGALERVIXKRKNPFLL.

It belongs to the G-protein coupled receptor 1 family.

It localises to the cell membrane. In terms of biological role, odorant receptor. This Pan troglodytes (Chimpanzee) protein is Olfactory receptor 1E5 (OR1E5).